Reading from the N-terminus, the 57-residue chain is Bowman-Birk type proteinase inhibitor B4 (57 aa).

4 disulfide bridges follow: Cys6/Cys55, Cys12/Cys17, Cys26/Cys33, and Cys30/Cys47.

This sequence belongs to the Bowman-Birk serine protease inhibitor family. In terms of tissue distribution, expressed in bulb (at protein level).

Functionally, serine protease inhibitor. Inhibits trypsin (Ki = 110 nM) and very weakly inhibits chymotrypsin (Ki =1200 nM). Does not inhibit bacterial subtilisin. The sequence is that of Bowman-Birk type proteinase inhibitor B4 from Hyacinthus orientalis (Common hyacinth).